Reading from the N-terminus, the 167-residue chain is Regulatory protein RecX (167 aa).

Positions 19-49 are disordered; it reads ESELRRKLASQPFSAKGHWGKQTGRSDNEPV.

It belongs to the RecX family.

Its subcellular location is the cytoplasm. In terms of biological role, modulates RecA activity. The sequence is that of Regulatory protein RecX from Yersinia enterocolitica serotype O:8 / biotype 1B (strain NCTC 13174 / 8081).